The sequence spans 293 residues: Protease HtpX (293 aa).

2 consecutive transmembrane segments (helical) span residues 4–24 and 34–54; these read IALF…VLSL and GLMI…LLMS. His139 lines the Zn(2+) pocket. Residue Glu140 is part of the active site. His143 contacts Zn(2+). The next 2 helical transmembrane spans lie at 158 to 178 and 193 to 213; these read IVNT…AGFL and MVYF…ASII. Residue Glu222 coordinates Zn(2+).

Belongs to the peptidase M48B family. Zn(2+) serves as cofactor.

Its subcellular location is the cell inner membrane. This is Protease HtpX from Yersinia enterocolitica serotype O:8 / biotype 1B (strain NCTC 13174 / 8081).